The sequence spans 390 residues: Putative 2-isopropylmalate synthase (390 aa).

Positions 5-267 (IIIFDTTLRD…KTNIKYQEIY (263 aa)) constitute a Pyruvate carboxyltransferase domain. 4 residues coordinate Mn(2+): Asp14, His202, His204, and Asn238.

This sequence belongs to the alpha-IPM synthase/homocitrate synthase family. LeuA type 1 subfamily. Homodimer. Requires Mn(2+) as cofactor.

It is found in the cytoplasm. The enzyme catalyses 3-methyl-2-oxobutanoate + acetyl-CoA + H2O = (2S)-2-isopropylmalate + CoA + H(+). It participates in amino-acid biosynthesis; L-leucine biosynthesis; L-leucine from 3-methyl-2-oxobutanoate: step 1/4. Catalyzes the condensation of the acetyl group of acetyl-CoA with 3-methyl-2-oxobutanoate (2-ketoisovalerate) to form 3-carboxy-3-hydroxy-4-methylpentanoate (2-isopropylmalate). The chain is Putative 2-isopropylmalate synthase from Buchnera aphidicola subsp. Baizongia pistaciae (strain Bp).